The chain runs to 353 residues: Galectin-9 (353 aa).

The region spanning 17–147 (FTGPIQGGLQ…CLKLSFITFQ (131 aa)) is the Galectin 1 domain. Residues N47, H60, R64, N74, and 81–87 (WGPEERK) each bind a beta-D-galactoside. A disordered region spans residues 167-186 (QFPRTPKGRKQKTQNFRPAH). In terms of domain architecture, Galectin 2 spans 225–353 (FYTPIPNGLY…GDIQLTHVQT (129 aa)). Residues H265, R269, T279, and 285–291 (WGQEERS) each bind a beta-D-galactoside.

Homodimer. As to expression, accentuated expression in liver and thymus of embryo, detected in embryonic heart, brain, lung, liver, and kidney. Highly expressed in adult thymus, small intestine, and liver, and to a lesser extent in lung, kidney, spleen, cardiac, and skeletal muscle. Barely detectable in brain and reticulocyte. Expressed in placenta, uterus and decidua during pregnancy. Expressed in CD4+ T-cells with higher levels in iTreg cells than other T-cell types and sustained high levels throughout iTreg cell differentiation (at protein level). Expressed in myeloid cells in lung. Constitutively expressed in microglia. Isoform 1 is expressed exclusively in the small intestine. Isoform 2 expression in decidua increases in pathological pregnancy from gestation day 7.5 to 13.5 and it is higher than in normal pregnancy. Isoform 3 expression in decidua is higher in normal pregnancy than in pathological pregnancy.

Its subcellular location is the cytoplasm. The protein localises to the nucleus. The protein resides in the secreted. Functionally, binds galactosides. Has high affinity for the Forssman pentasaccharide. Ligand for HAVCR2/TIM3. Binding to HAVCR2 induces T-helper type 1 lymphocyte (Th1) death. Also stimulates bactericidal activity in infected macrophages by causing macrophage activation and IL1B secretion which restricts intracellular bacterial growth. Ligand for P4HB; the interaction retains P4HB at the cell surface of Th2 T-helper cells, increasing disulfide reductase activity at the plasma membrane, altering the plasma membrane redox state and enhancing cell migration. Ligand for CD44; the interaction enhances binding of SMAD3 to the FOXP3 promoter, leading to up-regulation of FOXP3 expression and increased induced regulatory T (iTreg) cell stability and suppressive function. Promotes ability of mesenchymal stromal cells to suppress T-cell proliferation. Expands regulatory T-cells and induces cytotoxic T-cell apoptosis following virus infection. Activates ERK1/2 phosphorylation inducing cytokine (IL-6, IL-8, IL-12) and chemokine (CCL2) production in mast and dendritic cells. Inhibits degranulation and induces apoptosis of mast cells. Induces maturation and migration of dendritic cells. Inhibits natural killer (NK) cell function. Can transform NK cell phenotype from peripheral to decidual during pregnancy. Astrocyte derived galectin-9 enhances microglial TNF production. May play a role in thymocyte-epithelial interactions relevant to the biology of the thymus. May provide the molecular basis for urate flux across cell membranes, allowing urate that is formed during purine metabolism to efflux from cells and serving as an electrogenic transporter that plays an important role in renal and gastrointestinal urate excretion. Highly selective to the anion urate. Acts as an eosinophil chemoattractant. It also inhibits angiogenesis. Suppresses IFNG production by natural killer cells. The protein is Galectin-9 (Lgals9) of Mus musculus (Mouse).